Here is a 127-residue protein sequence, read N- to C-terminus: Protein translocase subunit SecE (127 aa).

Helical transmembrane passes span 16-36, 41-61, and 96-116; these read AMKW…NYLY, LPLR…VALL, and IVAA…GILV.

This sequence belongs to the SecE/SEC61-gamma family. Component of the Sec protein translocase complex. Heterotrimer consisting of SecY, SecE and SecG subunits. The heterotrimers can form oligomers, although 1 heterotrimer is thought to be able to translocate proteins. Interacts with the ribosome. Interacts with SecDF, and other proteins may be involved. Interacts with SecA.

It localises to the cell inner membrane. Essential subunit of the Sec protein translocation channel SecYEG. Clamps together the 2 halves of SecY. May contact the channel plug during translocation. The protein is Protein translocase subunit SecE of Salmonella typhi.